Here is a 107-residue protein sequence, read N- to C-terminus: uncharacterized protein (107 aa).

A helical membrane pass occupies residues Leu-62–Ala-79.

Its subcellular location is the nucleus membrane. This is an uncharacterized protein from Schizosaccharomyces pombe (strain 972 / ATCC 24843) (Fission yeast).